The primary structure comprises 358 residues: Bis(monoacylglycero)phosphate synthase CLN5 (358 aa).

Topologically, residues 1 to 23 (MAQEVDTAQGAEMRRGAGAARGR) are cytoplasmic. A helical; Signal-anchor for type II membrane protein membrane pass occupies residues 24–40 (ASWCWALALLWLAVVPG). Topologically, residues 41–358 (WSRVSGIPSR…PIRNKTLSGL (318 aa)) are lumenal. 2 cysteine pairs are disulfide-bonded: C70–C159 and C77–C165. The active-site Proton acceptor is the H117. N130, N143, N178, and N203 each carry an N-linked (GlcNAc...) asparagine glycan. The Nucleophile; Acyl-thioester intermediate role is filled by C231. Residues N255, N271, and N281 are each glycosylated (N-linked (GlcNAc...) asparagine). A membrane-anchoring region spans residues 304-343 (FLLSLLQIFDAVIVHKQFYLFYNFEYWFLPMKFPFIKITY). N-linked (GlcNAc...) asparagine glycosylation is present at N352.

The protein belongs to the CLN5 family. Multimer. Interacts with SORT1, RAB5A and RAB7A. Interacts with PPT1, TPP1, CLN3, CLN6, CLN8, ATP5F1A and ATP5F1B. In terms of processing, N-glycosylated with both high mannose and complex type sugars. Glycosylation is important for proper folding and trafficking to the lysosomes. Post-translationally, the type II membrane signal anchor is proteolytically cleaved to produce a mature form that is transported to the lysosomes (Bis(monoacylglycero)phosphate synthase CLN5, secreted form). Can undergo proteolytic cleavage at the C-terminus, probably by a cysteine protease and may involve the removal of approximately 10-15 residues from the C-terminal end. Ubiquitous.

The protein localises to the lysosome. The protein resides in the membrane. The catalysed reaction is S-hexadecanoyl-L-cysteinyl-[protein] + H2O = L-cysteinyl-[protein] + hexadecanoate + H(+). It catalyses the reaction 2 1-acyl-sn-glycero-3-phospho-(1'-sn-glycerol) = 1-acyl-sn-glycero-3-phospho-(3'-acyl-sn-1'-glycerol) + sn-glycero-3-phospho-(1'-sn-glycerol). The enzyme catalyses 2 1-(9Z-octadecenoyl)-sn-glycero-3-phospho-(1'-sn-glycerol) = 1-(9Z-octadecenoyl)-sn-glycero-3-phospho-(3'-(9Z-octadecenoyl)-1'-sn-glycerol) + sn-glycero-3-phospho-(1'-sn-glycerol). It carries out the reaction 2 1-octadecanoyl-sn-glycero-3-phospho-(1'-sn-glycerol) = 1-octadecanoyl-sn-glycero-3-phospho-(3'-octadecanoyl-1'-sn-glycerol) + sn-glycero-3-phospho-(1'-sn-glycerol). The catalysed reaction is 2 1-hexadecanoyl-sn-glycero-3-phospho-(1'-sn-glycerol) = 1-hexadecanoyl-sn-glycero-3-phospho-(3'-hexadecanoyl-1'-sn-glycerol) + sn-glycero-3-phospho-(1'-sn-glycerol). It catalyses the reaction 2 1-tetradecanoyl-sn-glycero-3-phospho-(1'-sn-glycerol) = 1-tetradecanoyl-sn-glycero-3-phospho-(3'-tetradecanoyl-1'-sn-glycerol) + sn-glycero-3-phospho-(1'-sn-glycerol). With respect to regulation, anionic phospholipids activate bis(monoacylglycero)phosphate (BMP) synthase activity. Amiodarone, a cationic amphiphilic drug inhibits BMP synthase activity towards liposomal lysophosphatidylglycerol. Palmostatin B inhibits palmitoyl protein thioesterase activity. In terms of biological role, catalyzes the synthesis of bis(monoacylglycero)phosphate (BMP) via transacylation of 2 molecules of lysophosphatidylglycerol (LPG). BMP also known as lysobisphosphatidic acid plays a key role in the formation of intraluminal vesicles and in maintaining intracellular cholesterol homeostasis. Can use only LPG as the exclusive lysophospholipid acyl donor for base exchange and displays BMP synthase activity towards various LPGs (LPG 14:0, LPG 16:0, LPG 18:0, LPG 18:1) with a higher preference for longer chain lengths. Plays a role in influencing the retrograde trafficking of lysosomal sorting receptors SORT1 and IGF2R from the endosomes to the trans-Golgi network by controlling the recruitment of retromer complex to the endosomal membrane. Regulates the localization and activation of RAB7A which is required to recruit the retromer complex to the endosomal membrane. Functionally, exhibits palmitoyl protein thioesterase (S-depalmitoylation) activity in vitro and most likely plays a role in protein S-depalmitoylation. This Homo sapiens (Human) protein is Bis(monoacylglycero)phosphate synthase CLN5 (CLN5).